Consider the following 458-residue polypeptide: Cysteine--tRNA ligase (458 aa).

Residue Cys33 coordinates Zn(2+). The 'HIGH' region signature appears at 35–45 (PTVYDFAHIGN). 3 residues coordinate Zn(2+): Cys221, His246, and Glu250. Residues 279-283 (KMSKS) carry the 'KMSKS' region motif. Lys282 is a binding site for ATP.

The protein belongs to the class-I aminoacyl-tRNA synthetase family. In terms of assembly, monomer. Zn(2+) serves as cofactor.

Its subcellular location is the cytoplasm. The catalysed reaction is tRNA(Cys) + L-cysteine + ATP = L-cysteinyl-tRNA(Cys) + AMP + diphosphate. This Rhizobium etli (strain ATCC 51251 / DSM 11541 / JCM 21823 / NBRC 15573 / CFN 42) protein is Cysteine--tRNA ligase.